Reading from the N-terminus, the 149-residue chain is D-aminoacyl-tRNA deacylase (149 aa).

Positions G137–P138 match the Gly-cisPro motif, important for rejection of L-amino acids motif.

The protein belongs to the DTD family. In terms of assembly, homodimer.

The protein localises to the cytoplasm. The enzyme catalyses glycyl-tRNA(Ala) + H2O = tRNA(Ala) + glycine + H(+). It carries out the reaction a D-aminoacyl-tRNA + H2O = a tRNA + a D-alpha-amino acid + H(+). Functionally, an aminoacyl-tRNA editing enzyme that deacylates mischarged D-aminoacyl-tRNAs. Also deacylates mischarged glycyl-tRNA(Ala), protecting cells against glycine mischarging by AlaRS. Acts via tRNA-based rather than protein-based catalysis; rejects L-amino acids rather than detecting D-amino acids in the active site. By recycling D-aminoacyl-tRNA to D-amino acids and free tRNA molecules, this enzyme counteracts the toxicity associated with the formation of D-aminoacyl-tRNA entities in vivo and helps enforce protein L-homochirality. The protein is D-aminoacyl-tRNA deacylase of Desulfotalea psychrophila (strain LSv54 / DSM 12343).